A 568-amino-acid chain; its full sequence is MTQSTIPNPRLDESRTIIAPTGTQLNAKSWLTEAPLRMLMNNLHPDVAEHPHALVVYGGIGRAARNWECYDKIVEVLKRLEDDETLIVQSGKPVGVFKTHTNAPRVLIANSNLVPHWANWEHFNELDKEGLMMYGQMTAGSWIYIGSQGIVQGTYETFVAMARQHFNGDAKGRWVLTGGLGGMGGAQPLAATMAGFSMLAVECDESRIDYRLRTGYVDSKATTLDEALAIIEESKQTGKPVSVGLLGNAADVYADIVKRGIVPDVTTDQTSAHDPLNGYLPQGWSMEHAAAMRLEDEAIVVKAAKQSMAVQVQAMLALQEAGSATVDYGNNIRQMALEEGVENAFDFPGFVPAYIRPLFCEGIGPFRWVALSGDPEDIYKTDQKVKELIPDNPHLHNWLDMARERIQFQGLPARICWVGLKDRARLGKAFNEMVKNGELKAPIVIGRDHLDSGSVASPNRETEGMMDGSDAVSDWPLLNALLNTASGATWVSLHHGGGVGMGFSQHSGMVIVCDGTDDAAERVGRVLRNDPATGVMRHADAGYDIAINCAEEQGLDLPMVNTKNTHSK.

Residues 58 to 59, Q136, 182 to 184, E202, R207, 248 to 249, 269 to 273, 279 to 280, and Y328 contribute to the NAD(+) site; these read GG, GMG, NA, QTSAH, and YL. Residue C416 is part of the active site. G498 contacts NAD(+).

It belongs to the urocanase family. NAD(+) serves as cofactor.

The protein localises to the cytoplasm. The enzyme catalyses 4-imidazolone-5-propanoate = trans-urocanate + H2O. The protein operates within amino-acid degradation; L-histidine degradation into L-glutamate; N-formimidoyl-L-glutamate from L-histidine: step 2/3. Functionally, catalyzes the conversion of urocanate to 4-imidazolone-5-propionate. The protein is Urocanate hydratase of Photobacterium profundum (strain SS9).